Here is a 298-residue protein sequence, read N- to C-terminus: Myoblast determination protein 1 homolog (298 aa).

The segment covering 53 to 73 (PEEHPHTRAPPREPTEEEHVR) has biased composition (basic and acidic residues). Residues 53-77 (PEEHPHTRAPPREPTEEEHVRAPSG) are disordered. Positions 100–151 (DRRKAATMRERRRLSKVNEAFETLKRCTSTNPNQRLPKVEILRNAIRYIESL) constitute a bHLH domain. Disordered stretches follow at residues 170 to 220 (SGES…GKSS) and 242 to 298 (CPIL…YQVL). Composition is skewed to polar residues over residues 173–183 (SDASSPRSNCS) and 257–284 (CSPQ…LPQE).

Efficient DNA binding requires dimerization with another bHLH protein. Seems to form active heterodimers with ITF-2.

It is found in the nucleus. In terms of biological role, acts as a transcriptional activator that promotes transcription of muscle-specific target genes and plays a role in muscle differentiation. Induces fibroblasts to differentiate into myoblasts. Interacts with and is inhibited by the twist protein. This interaction probably involves the basic domains of both proteins. In Gallus gallus (Chicken), this protein is Myoblast determination protein 1 homolog (MYOD1).